The chain runs to 198 residues: Holliday junction branch migration complex subunit RuvA (198 aa).

The segment at 1–61 (MILYRIGEII…EYQYATYAFK (61 aa)) is domain I. Positions 62–139 (DFKERLLFVD…KMISPKDAAK (78 aa)) are domain II. The tract at residues 140-144 (INETT) is flexible linker. The tract at residues 144–198 (TNTLSEVKETLKMVGFKTKQIDGALSKISSTDDVEKMIEEAIKLMSTQNYESATA) is domain III.

Belongs to the RuvA family. As to quaternary structure, homotetramer. Forms an RuvA(8)-RuvB(12)-Holliday junction (HJ) complex. HJ DNA is sandwiched between 2 RuvA tetramers; dsDNA enters through RuvA and exits via RuvB. An RuvB hexamer assembles on each DNA strand where it exits the tetramer. Each RuvB hexamer is contacted by two RuvA subunits (via domain III) on 2 adjacent RuvB subunits; this complex drives branch migration. In the full resolvosome a probable DNA-RuvA(4)-RuvB(12)-RuvC(2) complex forms which resolves the HJ.

The protein localises to the cytoplasm. Functionally, the RuvA-RuvB-RuvC complex processes Holliday junction (HJ) DNA during genetic recombination and DNA repair, while the RuvA-RuvB complex plays an important role in the rescue of blocked DNA replication forks via replication fork reversal (RFR). RuvA specifically binds to HJ cruciform DNA, conferring on it an open structure. The RuvB hexamer acts as an ATP-dependent pump, pulling dsDNA into and through the RuvAB complex. HJ branch migration allows RuvC to scan DNA until it finds its consensus sequence, where it cleaves and resolves the cruciform DNA. The polypeptide is Holliday junction branch migration complex subunit RuvA (Mycoplasmopsis agalactiae (strain NCTC 10123 / CIP 59.7 / PG2) (Mycoplasma agalactiae)).